The chain runs to 526 residues: Histidine ammonia-lyase (526 aa).

The segment at residues A143–G145 is a cross-link (5-imidazolinone (Ala-Gly)). At S144 the chain carries 2,3-didehydroalanine (Ser).

The protein belongs to the PAL/histidase family. Contains an active site 4-methylidene-imidazol-5-one (MIO), which is formed autocatalytically by cyclization and dehydration of residues Ala-Ser-Gly.

The protein localises to the cytoplasm. It catalyses the reaction L-histidine = trans-urocanate + NH4(+). It participates in amino-acid degradation; L-histidine degradation into L-glutamate; N-formimidoyl-L-glutamate from L-histidine: step 1/3. The sequence is that of Histidine ammonia-lyase from Aromatoleum aromaticum (strain DSM 19018 / LMG 30748 / EbN1) (Azoarcus sp. (strain EbN1)).